Reading from the N-terminus, the 286-residue chain is Putative WUSCHEL-related homeobox 2 (286 aa).

Positions 1-25 are disordered; that stretch reads MAPAVQQQQSGGGGGSTGAAAVGST. The homeobox; WUS-type DNA-binding region spans 23-87; it reads GSTTRWCPTP…NHKARDRQKL (65 aa).

The protein belongs to the WUS homeobox family.

The protein resides in the nucleus. In terms of biological role, transcription factor which may be involved in developmental processes. This is Putative WUSCHEL-related homeobox 2 (WOX2) from Oryza sativa subsp. japonica (Rice).